We begin with the raw amino-acid sequence, 375 residues long: Probable pectin lyase B (375 aa).

An N-terminal signal peptide occupies residues 1–19; it reads MKYAAFLPTIGALVSQAIA. 2 disulfide bridges follow: C82/C101 and C91/C225. N128 carries N-linked (GlcNAc...) asparagine glycosylation. Residue R255 is part of the active site. C321 and C329 are oxidised to a cystine.

This sequence belongs to the polysaccharide lyase 1 family.

The protein localises to the secreted. The catalysed reaction is Eliminative cleavage of (1-&gt;4)-alpha-D-galacturonan methyl ester to give oligosaccharides with 4-deoxy-6-O-methyl-alpha-D-galact-4-enuronosyl groups at their non-reducing ends.. Pectinolytic enzymes consist of four classes of enzymes: pectin lyase, polygalacturonase, pectin methylesterase and rhamnogalacturonase. Among pectinolytic enzymes, pectin lyase is the most important in depolymerization of pectin, since it cleaves internal glycosidic bonds of highly methylated pectins. In Aspergillus fumigatus (strain CBS 144.89 / FGSC A1163 / CEA10) (Neosartorya fumigata), this protein is Probable pectin lyase B (pelB).